The sequence spans 126 residues: Aspartate 1-decarboxylase (126 aa).

Ser-25 serves as the catalytic Schiff-base intermediate with substrate; via pyruvic acid. Ser-25 bears the Pyruvic acid (Ser) mark. Residue Thr-57 participates in substrate binding. Tyr-58 functions as the Proton donor in the catalytic mechanism. Position 73–75 (73–75 (GAA)) interacts with substrate.

It belongs to the PanD family. Heterooctamer of four alpha and four beta subunits. The cofactor is pyruvate. In terms of processing, is synthesized initially as an inactive proenzyme, which is activated by self-cleavage at a specific serine bond to produce a beta-subunit with a hydroxyl group at its C-terminus and an alpha-subunit with a pyruvoyl group at its N-terminus.

It is found in the cytoplasm. It carries out the reaction L-aspartate + H(+) = beta-alanine + CO2. It participates in cofactor biosynthesis; (R)-pantothenate biosynthesis; beta-alanine from L-aspartate: step 1/1. Functionally, catalyzes the pyruvoyl-dependent decarboxylation of aspartate to produce beta-alanine. This Salmonella arizonae (strain ATCC BAA-731 / CDC346-86 / RSK2980) protein is Aspartate 1-decarboxylase.